The sequence spans 126 residues: MTGYFLPPQTSSYTFRFAKVDDSAILSVGGDVAFGCCAQEQPPITSTNFTINGIKPWQGRLPDNIAGTVYMYAGFYCPMKIVYSNAVSWHTLPVSVELPDVTTVSDDFAGHVYSFDDDLTAQLYYP.

Residues 1 to 110 (MTGYFLPPQT…VTTVSDDFAG (110 aa)) enclose the PA14 domain.

It belongs to the flocculin family.

In Saccharomyces cerevisiae (strain ATCC 204508 / S288c) (Baker's yeast), this protein is Topoisomerase I damage affected protein 8 (TDA8).